We begin with the raw amino-acid sequence, 702 residues long: MLPASSKMPHKQPPPPRKQSISMGRGARKRDEDSGTEVGEGTDEWVQSKATVKPPDQLDLTDAELKEEFTRILTANNPHAPQNIVRYSFKEGTYKLIGFVDQLAVHFTQVGNLIPKDSDEGRRQHYRDELAASSQESAKVVISETEILEEEEEPKEVEAGSQTDVPIVEASEKMAEEELMTPKQPKERKLTNKFNFSERASQTFNNPLRDRECQMEPPPRTNFSATANQWEIYDAYMEELEKQEKTKEKEKTKTPVAKKMGKMAMRKMTSMESQSDDITKVTQAAKIVERMVNQNTYDDVAQDFKYYEDAADEYRDQEGTLLPLWKFQNDKAKRLAVTALCWNPKYNDLFAVGHGSYDFMKQSRGMLLLYSMKNPSFPEYIFSSESGIMCLDMHVDHPYLVVVGHYDGNVAIYNLKKPHSQPSFRSSAKSGKHTDPVWQVRWQKDDMDHNLNFFSVSSDGRIVSWTLVKSELVHTDVIKLKVEGSTTEGLEGLQIHTVGCGTAFDFHREIDYLFLVGTEEGKIYKCSKSYSSQFLDTYDAHNMAVDAVSWNPYHTKVFMSCSSDWTVKIWDHTIKTPMFIYDLNSAVGDVAWAPYSSTVFAAVTTNGKTHVFDLSINKYEAICNQPVVAKKKNKLTHVQFNPIHPIIIVGDDRGHVTCLKLSPNLRKMPKEKKGQEVQKGPAVEIAKLDKLLNLVREVKTKT.

A disordered region spans residues 1 to 58 (MLPASSKMPHKQPPPPRKQSISMGRGARKRDEDSGTEVGEGTDEWVQSKATVKPPDQL). A phosphoserine mark is found at Ser-134 and Ser-137. 5 WD repeats span residues 383 to 423 (SSES…SQPS), 432 to 475 (KHTD…LVHT), 540 to 580 (AHNM…PMFI), 582 to 622 (DLNS…YEAI), and 630 to 669 (KKKNKLTHVQFNPIHPIIIVGDDRGHVTCLKLSPNLRKMP).

This sequence belongs to the dynein intermediate chain family. As to quaternary structure, consists of at least two heavy chains and a number of intermediate and light chains. Interacts with BICD2. Interacts with CFAP45 and CFAP52. Interacts with CFAP53.

It localises to the cytoplasm. The protein localises to the cytoskeleton. Its subcellular location is the cilium axoneme. Part of the dynein complex of respiratory cilia. This Bos taurus (Bovine) protein is Dynein axonemal intermediate chain 1 (DNAI1).